The chain runs to 94 residues: MPSVNNYFDNKVTSIAFQTATKPATVGVMEIGDYEFGTSEFETMTVVSGALTVKLPESDEWQTFNAGAQFTVDANQKFQVKVEVETAYLCTYGE.

The protein belongs to the nucleoside phosphorylase PpnP family.

The enzyme catalyses a purine D-ribonucleoside + phosphate = a purine nucleobase + alpha-D-ribose 1-phosphate. It catalyses the reaction adenosine + phosphate = alpha-D-ribose 1-phosphate + adenine. It carries out the reaction cytidine + phosphate = cytosine + alpha-D-ribose 1-phosphate. The catalysed reaction is guanosine + phosphate = alpha-D-ribose 1-phosphate + guanine. The enzyme catalyses inosine + phosphate = alpha-D-ribose 1-phosphate + hypoxanthine. It catalyses the reaction thymidine + phosphate = 2-deoxy-alpha-D-ribose 1-phosphate + thymine. It carries out the reaction uridine + phosphate = alpha-D-ribose 1-phosphate + uracil. The catalysed reaction is xanthosine + phosphate = alpha-D-ribose 1-phosphate + xanthine. Its function is as follows. Catalyzes the phosphorolysis of diverse nucleosides, yielding D-ribose 1-phosphate and the respective free bases. Can use uridine, adenosine, guanosine, cytidine, thymidine, inosine and xanthosine as substrates. Also catalyzes the reverse reactions. In Psychrobacter arcticus (strain DSM 17307 / VKM B-2377 / 273-4), this protein is Pyrimidine/purine nucleoside phosphorylase 2.